We begin with the raw amino-acid sequence, 139 residues long: Actin-depolymerizing factor 3 (139 aa).

An ADF-H domain is found at 7-139 (GVAVNDECML…SLDEIKDRAR (133 aa)).

Belongs to the actin-binding proteins ADF family. Expressed in all tissues except pollen.

The protein localises to the cytoplasm. Its function is as follows. Actin-depolymerizing protein. Severs actin filaments (F-actin) and binds to actin monomers. The polypeptide is Actin-depolymerizing factor 3 (ADF3) (Zea mays (Maize)).